The primary structure comprises 269 residues: 4-hydroxy-tetrahydrodipicolinate reductase (269 aa).

NAD(+)-binding positions include 9 to 14 (GAGGRM) and glutamate 35. Arginine 36 is an NADP(+) binding site. NAD(+)-binding positions include 98–100 (GTT) and 122–125 (ASNY). Histidine 155 functions as the Proton donor/acceptor in the catalytic mechanism. Histidine 156 contributes to the (S)-2,3,4,5-tetrahydrodipicolinate binding site. Residue lysine 159 is the Proton donor of the active site. 165-166 (GT) contacts (S)-2,3,4,5-tetrahydrodipicolinate.

The protein belongs to the DapB family.

Its subcellular location is the cytoplasm. The catalysed reaction is (S)-2,3,4,5-tetrahydrodipicolinate + NAD(+) + H2O = (2S,4S)-4-hydroxy-2,3,4,5-tetrahydrodipicolinate + NADH + H(+). It carries out the reaction (S)-2,3,4,5-tetrahydrodipicolinate + NADP(+) + H2O = (2S,4S)-4-hydroxy-2,3,4,5-tetrahydrodipicolinate + NADPH + H(+). Its pathway is amino-acid biosynthesis; L-lysine biosynthesis via DAP pathway; (S)-tetrahydrodipicolinate from L-aspartate: step 4/4. Its function is as follows. Catalyzes the conversion of 4-hydroxy-tetrahydrodipicolinate (HTPA) to tetrahydrodipicolinate. This is 4-hydroxy-tetrahydrodipicolinate reductase from Actinobacillus pleuropneumoniae serotype 3 (strain JL03).